We begin with the raw amino-acid sequence, 125 residues long: Cytochrome c2 (125 aa).

An N-terminal signal peptide occupies residues 1-21 (MKAIKIAMVGAALVWSASAYA). Positions 23–123 (GDPVKGEQVF…DVIAFLATQH (101 aa)) constitute a Cytochrome c domain. Positions 35, 38, 39, and 101 each coordinate heme c.

This sequence belongs to the cytochrome c family. In terms of processing, binds 1 heme c group covalently per subunit.

Functionally, cytochrome c2 is found mainly in purple, non-sulfur, photosynthetic bacteria where it functions as the electron donor to the oxidized bacteriochlorophyll in the photophosphorylation pathway. However, it may also have a role in the respiratory chain and is found in some non-photosynthetic bacteria. This chain is Cytochrome c2, found in Rhodomicrobium vannielii (strain ATCC 17100 / DSM 162 / LMG 4299 / NCIMB 10020 / ATH 3.1.1).